We begin with the raw amino-acid sequence, 160 residues long: Single-stranded DNA-binding protein 2 (160 aa).

Residues Met-2–Glu-104 enclose the SSB domain. The tract at residues Asn-107–Phe-160 is disordered. Low complexity predominate over residues Ser-115–Gln-129. A compositionally biased stretch (polar residues) spans Thr-130–Phe-144. The Important for interaction with partner proteins motif lies at Glu-155–Phe-160.

In terms of assembly, homotetramer.

Functionally, plays an important role in DNA replication, recombination and repair. Binds to ssDNA and to an array of partner proteins to recruit them to their sites of action during DNA metabolism. The protein is Single-stranded DNA-binding protein 2 (ssb2) of Listeria monocytogenes serovar 1/2a (strain ATCC BAA-679 / EGD-e).